A 788-amino-acid chain; its full sequence is Choline transporter-like protein 1 (788 aa).

Residues 98–118 (FLFFVFLCGWVVVASLGIMWG) form a helical membrane-spanning segment. N-linked (GlcNAc...) asparagine glycosylation is present at Asn-276. 4 helical membrane passes run 329-349 (WWQTLILIFAAGMLSFIWTVI), 352-372 (LLGSLLIWLSIFLVLGALGFG), 409-429 (FVVAIATSVLLVIFLLVILFI), and 458-478 (LFPFLLHIGVFALWGSIAIWL). N-linked (GlcNAc...) asparagine glycosylation is present at Asn-497. A run of 5 helical transmembrane segments spans residues 531 to 551 (LFAFFWLSCFVTALGDIALAG), 583 to 603 (LGSIAFGSLIIAIVKIIRVML), 620 to 640 (WFLMCLKCCFWCLEMFFKFLT), 679 to 699 (AGILLFLGKAMITLGMGILSF), and 718 to 738 (YYFVPIVIVVIGSYFMADLFF).

Belongs to the CTL (choline transporter-like) family.

It is found in the membrane. The sequence is that of Choline transporter-like protein 1 (chtl-1) from Caenorhabditis briggsae.